The sequence spans 570 residues: Mitogen-activated protein kinase 11 (570 aa).

Positions 26–317 (YEVLEVIGKG…AQEALADPYF (292 aa)) constitute a Protein kinase domain. Residues 32–40 (IGKGSYGLV) and lysine 55 each bind ATP. Residue aspartate 152 is the Proton acceptor of the active site. Threonine 188 carries the post-translational modification Phosphothreonine. The TXY motif lies at 188–190 (TDY). Position 190 is a phosphotyrosine (tyrosine 190).

It belongs to the protein kinase superfamily. CMGC Ser/Thr protein kinase family. MAP kinase subfamily. Post-translationally, dually phosphorylated on Thr-188 and Tyr-190, which activates the enzyme.

The enzyme catalyses L-seryl-[protein] + ATP = O-phospho-L-seryl-[protein] + ADP + H(+). It catalyses the reaction L-threonyl-[protein] + ATP = O-phospho-L-threonyl-[protein] + ADP + H(+). Its activity is regulated as follows. Activated by threonine and tyrosine phosphorylation. The chain is Mitogen-activated protein kinase 11 (MPK11) from Oryza sativa subsp. japonica (Rice).